The primary structure comprises 368 residues: Dual-specificity RNA methyltransferase RlmN (368 aa).

Glu-94 functions as the Proton acceptor in the catalytic mechanism. A Radical SAM core domain is found at Glu-100–Asp-334. Cys-107 and Cys-339 are oxidised to a cystine. [4Fe-4S] cluster-binding residues include Cys-114, Cys-118, and Cys-121. Residues Gly-163 to Glu-164, Ser-195, Ser-217 to His-219, and Asn-296 each bind S-adenosyl-L-methionine. The S-methylcysteine intermediate role is filled by Cys-339.

This sequence belongs to the radical SAM superfamily. RlmN family. [4Fe-4S] cluster is required as a cofactor.

It localises to the cytoplasm. It catalyses the reaction adenosine(2503) in 23S rRNA + 2 reduced [2Fe-2S]-[ferredoxin] + 2 S-adenosyl-L-methionine = 2-methyladenosine(2503) in 23S rRNA + 5'-deoxyadenosine + L-methionine + 2 oxidized [2Fe-2S]-[ferredoxin] + S-adenosyl-L-homocysteine. It carries out the reaction adenosine(37) in tRNA + 2 reduced [2Fe-2S]-[ferredoxin] + 2 S-adenosyl-L-methionine = 2-methyladenosine(37) in tRNA + 5'-deoxyadenosine + L-methionine + 2 oxidized [2Fe-2S]-[ferredoxin] + S-adenosyl-L-homocysteine. Its function is as follows. Specifically methylates position 2 of adenine 2503 in 23S rRNA and position 2 of adenine 37 in tRNAs. m2A2503 modification seems to play a crucial role in the proofreading step occurring at the peptidyl transferase center and thus would serve to optimize ribosomal fidelity. In Aeromonas salmonicida (strain A449), this protein is Dual-specificity RNA methyltransferase RlmN.